Reading from the N-terminus, the 166-residue chain is Endoribonuclease YbeY (166 aa).

Positions 130, 134, and 140 each coordinate Zn(2+).

It belongs to the endoribonuclease YbeY family. It depends on Zn(2+) as a cofactor.

Its subcellular location is the cytoplasm. Functionally, single strand-specific metallo-endoribonuclease involved in late-stage 70S ribosome quality control and in maturation of the 3' terminus of the 16S rRNA. This Streptococcus uberis (strain ATCC BAA-854 / 0140J) protein is Endoribonuclease YbeY.